The sequence spans 723 residues: Tripartite motif-containing protein 42 (723 aa).

Residues 146 to 192 (CPMCNRLRLHSFMLPCNHSLCEKCLRQLQKHAEVTENFFILICPMCS) form an RING-type zinc finger. 2 consecutive B box-type zinc fingers follow at residues 235–280 (PILC…FVDT) and 285–326 (QDEK…TVSL). Zn(2+) is bound by residues cysteine 290, histidine 293, cysteine 313, and histidine 318. A coiled-coil region spans residues 382–412 (KLRAILQEKEKIIMEQIENLEVSRQKEIEKY). The COS domain occupies 434-492 (LKETGQVAFLQSAKILVDQIEEGIQNTFRPDPQLRLHSLHCIPLDFAELSNAIHELFPT). The region spanning 603-701 (TPGPIVIYQT…DICKVVTPDG (99 aa)) is the Fibronectin type-III domain.

Belongs to the TRIM/RBCC family.

This Mus musculus (Mouse) protein is Tripartite motif-containing protein 42 (Trim42).